Consider the following 190-residue polypeptide: dTTP/UTP pyrophosphatase (190 aa).

Aspartate 68 functions as the Proton acceptor in the catalytic mechanism.

It belongs to the Maf family. YhdE subfamily. The cofactor is a divalent metal cation.

Its subcellular location is the cytoplasm. It catalyses the reaction dTTP + H2O = dTMP + diphosphate + H(+). It carries out the reaction UTP + H2O = UMP + diphosphate + H(+). Its function is as follows. Nucleoside triphosphate pyrophosphatase that hydrolyzes dTTP and UTP. May have a dual role in cell division arrest and in preventing the incorporation of modified nucleotides into cellular nucleic acids. In Acholeplasma laidlawii (strain PG-8A), this protein is dTTP/UTP pyrophosphatase.